Consider the following 806-residue polypeptide: Leucine--tRNA ligase (806 aa).

Positions 40–51 (PYPSGTGLHVGH) match the 'HIGH' region motif. The 'KMSKS' region motif lies at 576–580 (KMSKS). K579 serves as a coordination point for ATP.

The protein belongs to the class-I aminoacyl-tRNA synthetase family.

It localises to the cytoplasm. It carries out the reaction tRNA(Leu) + L-leucine + ATP = L-leucyl-tRNA(Leu) + AMP + diphosphate. This is Leucine--tRNA ligase from Prosthecochloris aestuarii (strain DSM 271 / SK 413).